We begin with the raw amino-acid sequence, 88 residues long: Synaptonemal complex central element protein 3 (88 aa).

A coiled-coil region spans residues Glu7–Lys75.

As to quaternary structure, homodimer. Can form higher-order homooligomers. Interacts with SYCP1 (via tetrameric core); the interaction remodels SYCP1 homotetramers to 2:1 heterotrimers with SYCE3. SYCP1/SYCE3 heterotrimers form lattice assemblies as part of the mature synaptonemal complex via both lateral and head-to-head interactions. Interacts with the SYCE1-SIX6OS1 complex; the interaction recruits the SYCE1-SIX6OS1 complex to the central element of the synaptonemal complex. Interacts with the SYCE2-TEX12 complex; the interaction promotes fibrous assembly of SYCE2-TEX12 as part of the synaptonemal complex central element. Interacts with SYCE1. Interacts with SYCE2. Interacts with proteasome subunit PSMA8; to participate in meiosis progression during spermatogenesis. Interacts with SPO16.

It is found in the nucleus. The protein localises to the chromosome. In terms of biological role, major component of the transverse central element of synaptonemal complexes (SCS), formed between homologous chromosomes during meiotic prophase. Required for the assembly of the central element of the synaptonemal complex during meiosis, via remodeling of SYCP1 lattice structures and promoting recruitment of SYCE2-TEX12 and SYCE1-SIX60S1 complexes. Required for chromosome loading of the central element-specific SCS proteins, and for initiating synapsis between homologous chromosomes. Chromosome loading appears to require SYCP1. Required for fertility and normal testis development. This chain is Synaptonemal complex central element protein 3, found in Homo sapiens (Human).